A 178-amino-acid chain; its full sequence is Large ribosomal subunit protein uL6 (178 aa).

Belongs to the universal ribosomal protein uL6 family. As to quaternary structure, part of the 50S ribosomal subunit.

Functionally, this protein binds to the 23S rRNA, and is important in its secondary structure. It is located near the subunit interface in the base of the L7/L12 stalk, and near the tRNA binding site of the peptidyltransferase center. The protein is Large ribosomal subunit protein uL6 of Thermoplasma acidophilum (strain ATCC 25905 / DSM 1728 / JCM 9062 / NBRC 15155 / AMRC-C165).